The sequence spans 448 residues: Exodeoxyribonuclease 7 large subunit (448 aa).

Belongs to the XseA family. In terms of assembly, heterooligomer composed of large and small subunits.

It is found in the cytoplasm. It catalyses the reaction Exonucleolytic cleavage in either 5'- to 3'- or 3'- to 5'-direction to yield nucleoside 5'-phosphates.. Bidirectionally degrades single-stranded DNA into large acid-insoluble oligonucleotides, which are then degraded further into small acid-soluble oligonucleotides. The chain is Exodeoxyribonuclease 7 large subunit from Tolumonas auensis (strain DSM 9187 / NBRC 110442 / TA 4).